The primary structure comprises 126 residues: SOSS complex subunit C homolog (126 aa).

Residues Leu106 to Lys126 are disordered. Residues Glu107–Pro119 show a composition bias toward pro residues.

This sequence belongs to the SOSS-C family.

This chain is SOSS complex subunit C homolog, found in Drosophila sechellia (Fruit fly).